Reading from the N-terminus, the 216-residue chain is MSSEHDTPGEALRLSSTDIRILGSLIEKQATSPETYPLTLNALVIACNQKTSREPVMNLTQGQVGQSLRALEARGFTRLVMGSRADRWEQRLDKALELVPAQLILCGLMFLRGPQTVNELLTRSGRMHDFEDSEQVLHQLERLIARGLALHIPRQAGQREDRYTHALGDPADIEAILAARSNPVERSAGGAVSVERIEELEARIAALEERLAQLEG.

Belongs to the UPF0502 family.

The chain is UPF0502 protein PFL_4004 from Pseudomonas fluorescens (strain ATCC BAA-477 / NRRL B-23932 / Pf-5).